The sequence spans 610 residues: Elongation factor 4 (610 aa).

The 183-residue stretch at 11-193 (EKIRNFSIIA…QIVEKVPAPT (183 aa)) folds into the tr-type G domain. Residues 23 to 28 (DHGKST) and 140 to 143 (NKID) contribute to the GTP site.

It belongs to the TRAFAC class translation factor GTPase superfamily. Classic translation factor GTPase family. LepA subfamily.

It is found in the cell membrane. It carries out the reaction GTP + H2O = GDP + phosphate + H(+). Functionally, required for accurate and efficient protein synthesis under certain stress conditions. May act as a fidelity factor of the translation reaction, by catalyzing a one-codon backward translocation of tRNAs on improperly translocated ribosomes. Back-translocation proceeds from a post-translocation (POST) complex to a pre-translocation (PRE) complex, thus giving elongation factor G a second chance to translocate the tRNAs correctly. Binds to ribosomes in a GTP-dependent manner. The chain is Elongation factor 4 from Streptococcus suis (strain 98HAH33).